The following is a 1034-amino-acid chain: Potassium-transporting ATPase alpha chain 1 (1034 aa).

The Cytoplasmic segment spans residues 1–97 (MGKAENYELY…NALRPPRGTP (97 aa)). 2 positions are modified to phosphotyrosine: tyrosine 7 and tyrosine 10. Residues 14-41 (LGSGPGGDMTAKMSKKKAGGGGGKKKEK) are disordered. Residues 26-39 (MSKKKAGGGGGKKK) are compositionally biased toward basic residues. Serine 27 is subject to Phosphoserine. A helical transmembrane segment spans residues 98–118 (EYVKFARQLAGGLQCLMWVAA). At 119–141 (AICLIAFAIQASEGDLTTDDNLY) the chain is on the lumenal side. A helical transmembrane segment spans residues 142 to 162 (LAVALIAVVVVTGCFGYYQEF). Residues 163–298 (KSTNIIASFK…NEKTPIAIEI (136 aa)) are Cytoplasmic-facing. Residues 299 to 318 (EHFVDIIAGLAILFGATFFV) form a helical membrane-spanning segment. The Lumenal segment spans residues 319–330 (VAMCIGYTFLRA). The chain crosses the membrane as a helical span at residues 331 to 348 (MVFFMAIVVAYVPEGLLA). K(+) is bound by residues valine 339, alanine 340, valine 342, and glutamate 344. Topologically, residues 349-782 (TVTVCLSLTA…EQGRLIFDNL (434 aa)) are cytoplasmic. Aspartate 386 serves as the catalytic 4-aspartylphosphate intermediate. Aspartate 386 and threonine 388 together coordinate Mg(2+). Phosphoserine is present on residues serine 462 and serine 600. Mg(2+) contacts are provided by aspartate 727 and aspartate 731. The helical transmembrane segment at 783–802 (KKSIAYTLTKNIPELTPYLI) threads the bilayer. Residue glutamate 796 coordinates K(+). The Lumenal portion of the chain corresponds to 803–812 (YITVSVPLPL). The chain crosses the membrane as a helical span at residues 813 to 833 (GCITILFIELCTDIFPSVSLA). Position 821 (glutamate 821) interacts with K(+). Topologically, residues 834 to 853 (YEKAESDIMHLRPRNPKRDR) are cytoplasmic. Phosphoserine is present on serine 839. The chain crosses the membrane as a helical span at residues 854–876 (LVNEPLAAYSYFQIGAIQSFAGF). Over 877–928 (ADYFTAMAQEGWFPLLCVGLRPQWEDHHLQDLQDSYGQEWTFGQRLYQQYTC) the chain is Lumenal. The helical transmembrane segment at 929–948 (YTVFFISIEMCQIADVLIRK) threads the bilayer. Residues 949-962 (TRRLSVFQQGFFRN) lie on the Cytoplasmic side of the membrane. Serine 953 is subject to Phosphoserine; by PKA. Residues 963–981 (KILVIAIVFQVCIGCFLCY) form a helical membrane-spanning segment. The Lumenal portion of the chain corresponds to 982 to 996 (CPGMPNIFNFMPIRF). Residues 997–1017 (QWWLVPMPFGLLIFVYDEIRK) form a helical membrane-spanning segment. At 1018-1034 (LGVRCCPGSWWDQELYY) the chain is on the cytoplasmic side.

Belongs to the cation transport ATPase (P-type) (TC 3.A.3) family. Type IIC subfamily. As to quaternary structure, the gastric H(+)/K(+) ATPase pump is composed of the catalytic alpha subunit ATP4A and the regulatory beta subunit ATP4B. Interacts (via the P-domain) with ATP4B (via N-terminus); this interaction stabilizes the lumenal-open E2 conformation state and prevents the reverse reaction of the transport cycle. As to expression, expressed in parietal cells (at protein level).

The protein resides in the apical cell membrane. It catalyses the reaction K(+)(out) + ATP + H2O + H(+)(in) = K(+)(in) + ADP + phosphate + 2 H(+)(out). In terms of biological role, the catalytic subunit of the gastric H(+)/K(+) ATPase pump which transports H(+) ions in exchange for K(+) ions across the apical membrane of parietal cells. Uses ATP as an energy source to pump H(+) ions to the gastric lumen while transporting K(+) ion from the lumen into the cell. Remarkably generates a million-fold proton gradient across the gastric parietal cell membrane, acidifying the gastric juice down to pH 1. Within a transport cycle, the transfer of a H(+) ion across the membrane is coupled to ATP hydrolysis and is associated with a transient phosphorylation that shifts the pump conformation from inward-facing (E1) to outward-facing state (E2). The release of the H(+) ion in the stomach lumen is followed by binding of K(+) ion converting the pump conformation back to the E1 state. This chain is Potassium-transporting ATPase alpha chain 1, found in Mus musculus (Mouse).